The chain runs to 508 residues: Putative glycosyl hydrolase ecdF (508 aa).

The N-terminal stretch at Met-1–Ala-15 is a signal peptide. 4 N-linked (GlcNAc...) asparagine glycosylation sites follow: Asn-99, Asn-122, Asn-275, and Asn-362.

The protein belongs to the glycosyl hydrolase 32 family.

The sequence is that of Putative glycosyl hydrolase ecdF from Aspergillus rugulosus (Emericella rugulosa).